The primary structure comprises 635 residues: Frizzled and smoothened-like protein C (635 aa).

An N-terminal signal peptide occupies residues 1 to 20 (MKFKLIIFIIIIYIIKILKS). Over 21 to 244 (EILNEFGYGL…NKWVQMYKMS (224 aa)) the chain is Extracellular. One can recognise an FZ domain in the interval 32-166 (DENLKCLSFI…LTKYGYTENN (135 aa)). Intrachain disulfides connect Cys-37–Cys-108 and Cys-50–Cys-101. N-linked (GlcNAc...) asparagine glycosylation is found at Asn-65, Asn-141, Asn-156, Asn-185, and Asn-203. The helical transmembrane segment at 245–265 (IVLSTLSFICSIYNIITFGLL) threads the bilayer. Residues 266–275 (SKLKSKYNLC) are Cytoplasmic-facing. Residues 276–296 (ITFFSVSTVLMSLMDIVTYGI) traverse the membrane as a helical segment. Residues 297–314 (GYEELLCPESGRYAIQSD) are Extracellular-facing. The helical transmembrane segment at 315 to 335 (VACGVTGAFFHIGITTGVLWW) threads the bilayer. The Cytoplasmic portion of the chain corresponds to 336 to 356 (TTMSICLYSEVKRFKMISFRY). Residues 357–377 (IIIFNSVISLILLIIPLSGQA) form a helical membrane-spanning segment. At 378–398 (FMSGNGSLGCWIRKTWYANGT) the chain is on the extracellular side. N-linked (GlcNAc...) asparagine glycans are attached at residues Asn-382 and Asn-396. A helical membrane pass occupies residues 399-419 (FWIPCGISLFIGAICIVLVIY). The Cytoplasmic segment spans residues 420–440 (EIFKISRNLSKDNKPLMFQIR). The chain crosses the membrane as a helical span at residues 441–461 (PFLCVLLVGGSFLYLFIFYFN). Residues 462-496 (NERNLDKYKAAIPSYVQCLLSSDENGEDCLTDGPG) lie on the Extracellular side of the membrane. The chain crosses the membrane as a helical span at residues 497–517 (FGAYFTFYFFTRLFGITSFSI). Residues 518–635 (YGTSKIARDI…SSKDSNTNSF (118 aa)) are Cytoplasmic-facing. Residues 559–594 (SISGSNQKRFNRNGSNFNMKQNKSNPNDSISLSVVE) show a composition bias toward polar residues. A disordered region spans residues 559-635 (SISGSNQKRF…SSKDSNTNSF (77 aa)). A coiled-coil region spans residues 594-623 (ESTKKQDTENELESNIETKENRSTDISIEN). Positions 623–635 (NTTSSKDSNTNSF) are enriched in low complexity.

Belongs to the G-protein coupled receptor Fz/Smo family.

It localises to the membrane. The sequence is that of Frizzled and smoothened-like protein C (fslC) from Dictyostelium discoideum (Social amoeba).